A 210-amino-acid polypeptide reads, in one-letter code: Transmembrane protein 61 (210 aa).

2 helical membrane-spanning segments follow: residues 18 to 38 (YCMT…FAWW) and 69 to 89 (VSFV…LWSV). The segment at 140–172 (VAEGPPTPPAYPTEEALEPSGSRDALLSTQPAW) is disordered.

It is found in the membrane. The sequence is that of Transmembrane protein 61 (TMEM61) from Homo sapiens (Human).